The primary structure comprises 284 residues: Bifunctional protein FolD (284 aa).

Residues 165–167 (GRS) and serine 190 each bind NADP(+).

It belongs to the tetrahydrofolate dehydrogenase/cyclohydrolase family. Homodimer.

It carries out the reaction (6R)-5,10-methylene-5,6,7,8-tetrahydrofolate + NADP(+) = (6R)-5,10-methenyltetrahydrofolate + NADPH. The enzyme catalyses (6R)-5,10-methenyltetrahydrofolate + H2O = (6R)-10-formyltetrahydrofolate + H(+). The protein operates within one-carbon metabolism; tetrahydrofolate interconversion. Catalyzes the oxidation of 5,10-methylenetetrahydrofolate to 5,10-methenyltetrahydrofolate and then the hydrolysis of 5,10-methenyltetrahydrofolate to 10-formyltetrahydrofolate. The sequence is that of Bifunctional protein FolD from Streptococcus mutans serotype c (strain ATCC 700610 / UA159).